Reading from the N-terminus, the 246-residue chain is 1-(5-phosphoribosyl)-5-[(5-phosphoribosylamino)methylideneamino] imidazole-4-carboxamide isomerase (246 aa).

Catalysis depends on D10, which acts as the Proton acceptor. Residue D135 is the Proton donor of the active site.

The protein belongs to the HisA/HisF family.

The protein resides in the cytoplasm. It carries out the reaction 1-(5-phospho-beta-D-ribosyl)-5-[(5-phospho-beta-D-ribosylamino)methylideneamino]imidazole-4-carboxamide = 5-[(5-phospho-1-deoxy-D-ribulos-1-ylimino)methylamino]-1-(5-phospho-beta-D-ribosyl)imidazole-4-carboxamide. The protein operates within amino-acid biosynthesis; L-histidine biosynthesis; L-histidine from 5-phospho-alpha-D-ribose 1-diphosphate: step 4/9. In Methanosarcina mazei (strain ATCC BAA-159 / DSM 3647 / Goe1 / Go1 / JCM 11833 / OCM 88) (Methanosarcina frisia), this protein is 1-(5-phosphoribosyl)-5-[(5-phosphoribosylamino)methylideneamino] imidazole-4-carboxamide isomerase.